The sequence spans 156 residues: CRIB domain-containing protein RIC10 (156 aa).

The 14-residue stretch at 30–43 (IGFPTDVKHVAHIG) folds into the CRIB domain. Residues 68-77 (RPSSFSNARP) are compositionally biased toward polar residues. Residues 68–156 (RPSSFSNARP…SYKSTVSRLI (89 aa)) form a disordered region. Positions 78–96 (STSFFTSSSSTDFDQGSSQ) are enriched in low complexity. Over residues 117-128 (NNKKKSSRRKKS) the composition is skewed to basic residues. Low complexity predominate over residues 129–156 (SSSSSSPKSSRSSVLSKSSYKSTVSRLI).

As to expression, expressed in roots, leaves, flowers and pollen.

The protein localises to the cytoplasm. Functions as a downstream effector of Rho-related GTP binding proteins of the 'Rho of Plants' (ROPs) family. Participates in the propagation of ROP GTPase signals in specific cellular responses. Is involved in pollen tube growth regulation. The sequence is that of CRIB domain-containing protein RIC10 (RIC10) from Arabidopsis thaliana (Mouse-ear cress).